The sequence spans 227 residues: Cytochrome c oxidase subunit 2 (227 aa).

The Mitochondrial intermembrane portion of the chain corresponds to 1–14 (MAYPYELGFQDASS). Residues 15–45 (PIMEELLHFHDHTLMIVFLISTLVLYLITIM) form a helical membrane-spanning segment. Over 46–59 (LTTKLTHTSTMDAQ) the chain is Mitochondrial matrix. A helical transmembrane segment spans residues 60–87 (EIETIWTILPAIILILIALPSLRILYMM). The Mitochondrial intermembrane portion of the chain corresponds to 88–227 (DEINSPSLTV…DFEIWSSSML (140 aa)). Cu cation is bound by residues His161, Cys196, Glu198, Cys200, His204, and Met207. Glu198 is a binding site for Mg(2+).

Belongs to the cytochrome c oxidase subunit 2 family. In terms of assembly, component of the cytochrome c oxidase (complex IV, CIV), a multisubunit enzyme composed of 14 subunits. The complex is composed of a catalytic core of 3 subunits MT-CO1, MT-CO2 and MT-CO3, encoded in the mitochondrial DNA, and 11 supernumerary subunits COX4I, COX5A, COX5B, COX6A, COX6B, COX6C, COX7A, COX7B, COX7C, COX8 and NDUFA4, which are encoded in the nuclear genome. The complex exists as a monomer or a dimer and forms supercomplexes (SCs) in the inner mitochondrial membrane with NADH-ubiquinone oxidoreductase (complex I, CI) and ubiquinol-cytochrome c oxidoreductase (cytochrome b-c1 complex, complex III, CIII), resulting in different assemblies (supercomplex SCI(1)III(2)IV(1) and megacomplex MCI(2)III(2)IV(2)). Found in a complex with TMEM177, COA6, COX18, COX20, SCO1 and SCO2. Interacts with TMEM177 in a COX20-dependent manner. Interacts with COX20. Interacts with COX16. Requires Cu cation as cofactor.

The protein resides in the mitochondrion inner membrane. It catalyses the reaction 4 Fe(II)-[cytochrome c] + O2 + 8 H(+)(in) = 4 Fe(III)-[cytochrome c] + 2 H2O + 4 H(+)(out). Its function is as follows. Component of the cytochrome c oxidase, the last enzyme in the mitochondrial electron transport chain which drives oxidative phosphorylation. The respiratory chain contains 3 multisubunit complexes succinate dehydrogenase (complex II, CII), ubiquinol-cytochrome c oxidoreductase (cytochrome b-c1 complex, complex III, CIII) and cytochrome c oxidase (complex IV, CIV), that cooperate to transfer electrons derived from NADH and succinate to molecular oxygen, creating an electrochemical gradient over the inner membrane that drives transmembrane transport and the ATP synthase. Cytochrome c oxidase is the component of the respiratory chain that catalyzes the reduction of oxygen to water. Electrons originating from reduced cytochrome c in the intermembrane space (IMS) are transferred via the dinuclear copper A center (CU(A)) of subunit 2 and heme A of subunit 1 to the active site in subunit 1, a binuclear center (BNC) formed by heme A3 and copper B (CU(B)). The BNC reduces molecular oxygen to 2 water molecules using 4 electrons from cytochrome c in the IMS and 4 protons from the mitochondrial matrix. The chain is Cytochrome c oxidase subunit 2 (MT-CO2) from Cavia aperea (Brazilian guinea pig).